A 460-amino-acid polypeptide reads, in one-letter code: Tyrosine phenol-lyase (460 aa).

Position 260 is an N6-(pyridoxal phosphate)lysine (K260).

The protein belongs to the beta-eliminating lyase family. Homotetramer. It depends on pyridoxal 5'-phosphate as a cofactor.

It catalyses the reaction L-tyrosine + H2O = phenol + pyruvate + NH4(+). The protein is Tyrosine phenol-lyase of Clostridium tetani (strain Massachusetts / E88).